Reading from the N-terminus, the 621-residue chain is Glutamine--fructose-6-phosphate aminotransferase [isomerizing] (621 aa).

Catalysis depends on cysteine 2, which acts as the Nucleophile; for GATase activity. In terms of domain architecture, Glutamine amidotransferase type-2 spans 2–223; sequence CGIIGYVGEG…DRELGIISIS (222 aa). SIS domains are found at residues 289-436 and 470-611; these read LHLE…HKFT and LSKQ…IDKP. Residue lysine 616 is the For Fru-6P isomerization activity of the active site.

As to quaternary structure, homodimer.

Its subcellular location is the plastid. The protein localises to the chloroplast. The enzyme catalyses D-fructose 6-phosphate + L-glutamine = D-glucosamine 6-phosphate + L-glutamate. Its function is as follows. Catalyzes the first step in hexosamine metabolism, converting fructose-6P into glucosamine-6P using glutamine as a nitrogen source. The sequence is that of Glutamine--fructose-6-phosphate aminotransferase [isomerizing] from Cyanidium caldarium (Red alga).